A 224-amino-acid polypeptide reads, in one-letter code: N-(5'-phosphoribosyl)anthranilate isomerase (224 aa).

Belongs to the TrpF family.

The catalysed reaction is N-(5-phospho-beta-D-ribosyl)anthranilate = 1-(2-carboxyphenylamino)-1-deoxy-D-ribulose 5-phosphate. Its pathway is amino-acid biosynthesis; L-tryptophan biosynthesis; L-tryptophan from chorismate: step 3/5. The protein is N-(5'-phosphoribosyl)anthranilate isomerase (TRP1) of Saccharomyces cerevisiae (strain ATCC 204508 / S288c) (Baker's yeast).